Reading from the N-terminus, the 115-residue chain is Pycsar effector protein TpPycTM (115 aa).

Transmembrane regions (helical) follow at residues 44 to 64 (IGNLLLIDTITVGIFITYATN) and 74 to 94 (VWNILLFITGLIFTVSSVILV).

Its subcellular location is the cell inner membrane. Pycsar (pyrimidine cyclase system for antiphage resistance) provides immunity against bacteriophage. The pyrimidine cyclase (PycC) synthesizes cyclic nucleotides in response to infection; these serve as specific second messenger signals. The signals activate the adjacent effector, leading to bacterial cell death and abortive phage infection. A clade C Pycsar system. Its function is as follows. The effector gene of a two-gene Pycsar system. Expression of this and adjacent uridylate cyclase TpPycC (AC A0A1T4LJ54) probably confers resistance to bacteriophage. The genes are probably only expressed in response to bacteriophage infection. Probably only responds to cUMP (produced by its cognate NTP cyclase), acts by impairing membrane integrity. The chain is Pycsar effector protein TpPycTM from Treponema porcinum.